Consider the following 555-residue polypeptide: 2-succinyl-5-enolpyruvyl-6-hydroxy-3-cyclohexene-1-carboxylate synthase (555 aa).

This sequence belongs to the TPP enzyme family. MenD subfamily. As to quaternary structure, homodimer. The cofactor is Mg(2+). It depends on Mn(2+) as a cofactor. Requires thiamine diphosphate as cofactor.

It catalyses the reaction isochorismate + 2-oxoglutarate + H(+) = 5-enolpyruvoyl-6-hydroxy-2-succinyl-cyclohex-3-ene-1-carboxylate + CO2. Its pathway is quinol/quinone metabolism; 1,4-dihydroxy-2-naphthoate biosynthesis; 1,4-dihydroxy-2-naphthoate from chorismate: step 2/7. It participates in quinol/quinone metabolism; menaquinone biosynthesis. Its function is as follows. Catalyzes the thiamine diphosphate-dependent decarboxylation of 2-oxoglutarate and the subsequent addition of the resulting succinic semialdehyde-thiamine pyrophosphate anion to isochorismate to yield 2-succinyl-5-enolpyruvyl-6-hydroxy-3-cyclohexene-1-carboxylate (SEPHCHC). The sequence is that of 2-succinyl-5-enolpyruvyl-6-hydroxy-3-cyclohexene-1-carboxylate synthase from Cronobacter sakazakii (strain ATCC BAA-894) (Enterobacter sakazakii).